A 531-amino-acid polypeptide reads, in one-letter code: Serine protease gd (531 aa).

The signal sequence occupies residues 1-19 (MRLHLAAILILCIEHVTKA). A disordered region spans residues 155–174 (PEEEEVRKTDDKPPSTPHIQ). Positions 246-531 (IESDSADSLP…FLDWITAFVI (286 aa)) constitute a Peptidase S1 domain. N-linked (GlcNAc...) asparagine glycosylation occurs at asparagine 272. Cysteine 280 and cysteine 296 are oxidised to a cystine. Residues histidine 295 and aspartate 350 each act as charge relay system in the active site. N-linked (GlcNAc...) asparagine glycosylation is found at asparagine 397 and asparagine 445. An intrachain disulfide couples cysteine 432 to cysteine 449. Serine 471 serves as the catalytic Charge relay system.

The protein belongs to the peptidase S1 family. Post-translationally, proteolytically activated by the protease ndl. In terms of tissue distribution, expression begins in previtellogenic stages and is seen in germline-derived nurse cells of the germarium. Expression continues throughout oogenesis with transcripts from the nurse cells accumulating in the oocytes. Most abundant in the ovaries, the level of protein decreases from the moment of egg laying and is essentially gone by 4 hours.

The protein localises to the secreted. In terms of biological role, component of the extracellular signaling pathway that establishes the dorsal-ventral pathway of the embryo. A protease cascade involving ndl, gd, snk and ea results in activation of the spz Toll receptor ligand; acts downstream of ndl but upstream of snk and ea. Activation of ea requires activation of the ndl-gd-snk protease cascade and sulfation of a vitelline membrane component by pip. Localized activation of the Toll receptor in the ventral region of the embryo defines cell identities along the dorsal-ventral continuum. The polypeptide is Serine protease gd (Drosophila melanogaster (Fruit fly)).